Consider the following 443-residue polypeptide: uncharacterized protein (443 aa).

Positions 1 to 21 are disordered; it reads MQSVTPPPTQQGKPDPTNSDM. Residues 10–20 are compositionally biased toward polar residues; the sequence is QQGKPDPTNSD.

This is an uncharacterized protein from Caenorhabditis elegans.